A 218-amino-acid polypeptide reads, in one-letter code: Small ribosomal subunit protein uS3c (218 aa).

The KH type-2 domain maps to 39-120 (IRNFMNKELL…IITCKVVGVT (82 aa)).

The protein belongs to the universal ribosomal protein uS3 family. In terms of assembly, part of the 30S ribosomal subunit.

Its subcellular location is the plastid. The protein resides in the chloroplast. This Euglena gracilis protein is Small ribosomal subunit protein uS3c (rps3).